Here is a 424-residue protein sequence, read N- to C-terminus: Serine--tRNA ligase (424 aa).

229-231 provides a ligand contact to L-serine; that stretch reads TAE. Residue 260–262 coordinates ATP; it reads RRE. Residue Glu-283 coordinates L-serine. 347-350 is a binding site for ATP; sequence EVSS. Position 383 (Ser-383) interacts with L-serine.

It belongs to the class-II aminoacyl-tRNA synthetase family. Type-1 seryl-tRNA synthetase subfamily. As to quaternary structure, homodimer. The tRNA molecule binds across the dimer.

Its subcellular location is the cytoplasm. The catalysed reaction is tRNA(Ser) + L-serine + ATP = L-seryl-tRNA(Ser) + AMP + diphosphate + H(+). It catalyses the reaction tRNA(Sec) + L-serine + ATP = L-seryl-tRNA(Sec) + AMP + diphosphate + H(+). Its pathway is aminoacyl-tRNA biosynthesis; selenocysteinyl-tRNA(Sec) biosynthesis; L-seryl-tRNA(Sec) from L-serine and tRNA(Sec): step 1/1. Catalyzes the attachment of serine to tRNA(Ser). Is also able to aminoacylate tRNA(Sec) with serine, to form the misacylated tRNA L-seryl-tRNA(Sec), which will be further converted into selenocysteinyl-tRNA(Sec). The protein is Serine--tRNA ligase of Roseiflexus sp. (strain RS-1).